A 409-amino-acid polypeptide reads, in one-letter code: NADH-ubiquinone oxidoreductase chain 4 (409 aa).

The next 13 helical transmembrane spans lie at 10–30 (LWLF…FLIF), 44–64 (SYSF…IVIS), 76–96 (ILVF…LYMF), 98–118 (ELSM…IEKI), 120–140 (SSYY…FVYF), 160–180 (FFIL…HLWL), 194–214 (LLAG…LGSL), 221–241 (VWIL…VFQS), 245–265 (ALAA…LVFI), 271–291 (ISSV…FYLI), 305–325 (FMSS…VVFL), 353–373 (MFVM…FLIT), and 389–409 (VGFS…SVFY).

The protein belongs to the complex I subunit 4 family.

The protein resides in the mitochondrion membrane. It carries out the reaction a ubiquinone + NADH + 5 H(+)(in) = a ubiquinol + NAD(+) + 4 H(+)(out). Its function is as follows. Core subunit of the mitochondrial membrane respiratory chain NADH dehydrogenase (Complex I) that is believed to belong to the minimal assembly required for catalysis. Complex I functions in the transfer of electrons from NADH to the respiratory chain. The immediate electron acceptor for the enzyme is believed to be ubiquinone. The polypeptide is NADH-ubiquinone oxidoreductase chain 4 (Caenorhabditis elegans).